Reading from the N-terminus, the 523-residue chain is Katanin p60 ATPase-containing subunit A1 (523 aa).

The segment at 82–215 (KEAPTGRRAA…DGKSKRGLYE (134 aa)) is disordered. Residues 178-194 (AGARSSTAGKKGAASKS) show a composition bias toward low complexity. 279–286 (GPPGTGKT) is an ATP binding site.

It belongs to the AAA ATPase family. Katanin p60 subunit A1 subfamily. In terms of assembly, may homooligomerize. Component of KTN80-KTN1 complexes composed of a hexamer of KTN1-KTN80 heterodimers that sense microtubule (MT) geometry to confer precise MT severing. Interacts directly with KTN80.1, KTN80.2, KTN80.3 and KTN80.4. Can interact with KTN80.1. May interact with the kinesin related protein KIN14A. Interacts with microtubule polymers. Binds to IPGA1. Expressed ubiquitously, including siliques, flowers, leaves, stems and roots.

Its subcellular location is the cytoplasm. The protein resides in the cytoskeleton. The enzyme catalyses n ATP + n H2O + a microtubule = n ADP + n phosphate + (n+1) alpha/beta tubulin heterodimers.. Functionally, severs microtubules in vitro in an ATP-dependent manner. Required for oligomerization of functional KTN80-KTN1 complexes that catalyze microtubule severing. This activity may promote rapid reorganization of cellular microtubule arrays. May be required for reorientation of cortical microtubule arrays during cellular elongation. Failure to correctly orient these arrays drastically compromises fiber length, cell wall thickness and mechanical strength. May also be required for the spatial organization of developmental cues within the root. Involved in the IPGA1- and AN-dependent regulation of pavement cells morphogenesis leading to puzzle shape. This is Katanin p60 ATPase-containing subunit A1 from Arabidopsis thaliana (Mouse-ear cress).